The chain runs to 29 residues: Cytochrome b6-f complex subunit 8 (29 aa).

Residues 3 to 23 traverse the membrane as a helical segment; the sequence is ILSISWAFLMVVFTFSLSLVV.

It belongs to the PetN family. As to quaternary structure, the 4 large subunits of the cytochrome b6-f complex are cytochrome b6, subunit IV (17 kDa polypeptide, PetD), cytochrome f and the Rieske protein, while the 4 small subunits are PetG, PetL, PetM and PetN. The complex functions as a dimer.

It localises to the plastid. Its subcellular location is the chloroplast thylakoid membrane. In terms of biological role, component of the cytochrome b6-f complex, which mediates electron transfer between photosystem II (PSII) and photosystem I (PSI), cyclic electron flow around PSI, and state transitions. In Chara vulgaris (Common stonewort), this protein is Cytochrome b6-f complex subunit 8.